A 114-amino-acid chain; its full sequence is Vacuolar morphogenesis protein 10 (114 aa).

The protein resides in the vacuole membrane. Functionally, required for vacuolar fusion. Involved in the early steps of the fusion pathway. The protein is Vacuolar morphogenesis protein 10 (VAM10) of Saccharomyces cerevisiae (strain ATCC 204508 / S288c) (Baker's yeast).